We begin with the raw amino-acid sequence, 446 residues long: MITIKKGLDLPIAGTPSQVISDGKAIKKVALLGEEYVGMRPTMHVRVGDEVKKAQILFEDKKNPGVKFTSPVSGKVVEINRGAKRVLQSVVIEVAGDDQVTFDKFEANQLASLNRDAIKTQLVESGLWTAFRTRPFSKVPAIDSTSEAIFVTAMDTNPLAAEPTVVINEQSEAFVAGLDVLSALTTGKVYVCKKGTSLPRSQQPNVEEHVFDGPHPAGLAGTHMHFLYPVSADHVAWSINYQDVIAVGQLFLTGELYTQRVVSLAGPVVNKPRLVRTVMGASLEQLVDSEIMPGEVRIISGSVLSGTKATGPHAYLGRYHLQVSVLREGRDKELFGWAMPGKNKFSVTRSFLGHLFKGQVYNMTTTTNGSDRSMVPIGNYEKVMPLDMEPTLLLRDLCAGDSDSAVRLGALELDEEDLALCTFVCPGKYEYGQLLRECLDKIEKEG.

Belongs to the NqrA family. As to quaternary structure, composed of six subunits; NqrA, NqrB, NqrC, NqrD, NqrE and NqrF.

The enzyme catalyses a ubiquinone + n Na(+)(in) + NADH + H(+) = a ubiquinol + n Na(+)(out) + NAD(+). NQR complex catalyzes the reduction of ubiquinone-1 to ubiquinol by two successive reactions, coupled with the transport of Na(+) ions from the cytoplasm to the periplasm. NqrA to NqrE are probably involved in the second step, the conversion of ubisemiquinone to ubiquinol. The chain is Na(+)-translocating NADH-quinone reductase subunit A from Vibrio cholerae serotype O1 (strain ATCC 39541 / Classical Ogawa 395 / O395).